The primary structure comprises 92 residues: Small ribosomal subunit protein uS19c (92 aa).

This sequence belongs to the universal ribosomal protein uS19 family.

It is found in the plastid. It localises to the chloroplast. Functionally, protein S19 forms a complex with S13 that binds strongly to the 16S ribosomal RNA. This Marchantia polymorpha (Common liverwort) protein is Small ribosomal subunit protein uS19c (rps19).